We begin with the raw amino-acid sequence, 319 residues long: Super small secreted glycoprotein (319 aa).

An N-terminal signal peptide occupies residues 1–32 (MGGLSLLQLPRDKFRKSSFFVWVIILFQKAFS). N-linked (GlcNAc...) asparagine; by host glycosylation occurs at asparagine 40. 2 disulfide bridges follow: cysteine 108-cysteine 135 and cysteine 121-cysteine 147. Residues asparagine 204, asparagine 208, asparagine 238, asparagine 257, and asparagine 268 are each glycosylated (N-linked (GlcNAc...) asparagine; by host).

It belongs to the filoviruses glycoprotein family.

Its subcellular location is the secreted. The chain is Super small secreted glycoprotein (GP) from Sudan ebolavirus (strain Human/Uganda/Gulu/2000) (SEBOV).